We begin with the raw amino-acid sequence, 300 residues long: DNA packaging protein OPG160 (300 aa).

It belongs to the orthopoxvirus OPG160 protein family. As to quaternary structure, interacts with protein OPG137.

Its function is as follows. Participates in viral DNA packaging and virion morphogenesis. The protein is DNA packaging protein OPG160 (OPG160) of Monkeypox virus.